The primary structure comprises 519 residues: Galactose-1-phosphate uridylyltransferase (519 aa).

Belongs to the galactose-1-phosphate uridylyltransferase type 2 family.

It localises to the cytoplasm. The enzyme catalyses alpha-D-galactose 1-phosphate + UDP-alpha-D-glucose = alpha-D-glucose 1-phosphate + UDP-alpha-D-galactose. Its pathway is carbohydrate metabolism; galactose metabolism. The polypeptide is Galactose-1-phosphate uridylyltransferase (Caldanaerobacter subterraneus subsp. tengcongensis (strain DSM 15242 / JCM 11007 / NBRC 100824 / MB4) (Thermoanaerobacter tengcongensis)).